Consider the following 148-residue polypeptide: MNTISILSTTDLPAAWQIEQRAHAFPWSEKTFFGNQGERYLNLKLTADDRMAAFAITQVVLDEATLFNIAVDPDFQRRGLGRMLLEHLIDELETRGVVTLWLEVRASNAAAIALYESLGFNEATIRRNYYPTAQGHEDAIIMALPISM.

Residues Asn-2–Ser-147 enclose the N-acetyltransferase domain. Residues Ile-69–Val-71 and Arg-77–Arg-82 each bind acetyl-CoA. The active-site Proton acceptor is the Glu-103. Asn-108 provides a ligand contact to acetyl-CoA. The active-site Proton donor is the Tyr-115.

Belongs to the acetyltransferase family. RimI subfamily.

The protein resides in the cytoplasm. The enzyme catalyses N-terminal L-alanyl-[ribosomal protein bS18] + acetyl-CoA = N-terminal N(alpha)-acetyl-L-alanyl-[ribosomal protein bS18] + CoA + H(+). Acetylates the N-terminal alanine of ribosomal protein bS18. The sequence is that of [Ribosomal protein bS18]-alanine N-acetyltransferase from Salmonella typhimurium (strain LT2 / SGSC1412 / ATCC 700720).